The following is a 183-amino-acid chain: Bifunctional protein PyrR (183 aa).

Residues Thr46–Arg47, Arg87, Asp107–Thr115, Arg140, and Val164 each bind substrate. The PRPP-binding signature appears at Val103–Thr115.

This sequence belongs to the purine/pyrimidine phosphoribosyltransferase family. PyrR subfamily.

The catalysed reaction is UMP + diphosphate = 5-phospho-alpha-D-ribose 1-diphosphate + uracil. Its function is as follows. Regulates the transcription of the pyrimidine nucleotide (pyr) operon in response to exogenous pyrimidines. Functionally, also displays a weak uracil phosphoribosyltransferase activity which is not physiologically significant. In Thermosynechococcus vestitus (strain NIES-2133 / IAM M-273 / BP-1), this protein is Bifunctional protein PyrR.